A 115-amino-acid chain; its full sequence is Large ribosomal subunit protein bL19 (115 aa).

Belongs to the bacterial ribosomal protein bL19 family.

This protein is located at the 30S-50S ribosomal subunit interface and may play a role in the structure and function of the aminoacyl-tRNA binding site. The protein is Large ribosomal subunit protein bL19 of Coxiella burnetii (strain CbuK_Q154) (Coxiella burnetii (strain Q154)).